A 557-amino-acid chain; its full sequence is Urocanate hydratase (557 aa).

Residues 53–54 (GG), glutamine 131, 177–179 (GMG), glutamate 197, arginine 202, 243–244 (NA), 264–268 (QTSAH), 274–275 (YL), and tyrosine 323 contribute to the NAD(+) site. Cysteine 411 is a catalytic residue. An NAD(+)-binding site is contributed by glycine 493.

The protein belongs to the urocanase family. NAD(+) is required as a cofactor.

Its subcellular location is the cytoplasm. The catalysed reaction is 4-imidazolone-5-propanoate = trans-urocanate + H2O. It participates in amino-acid degradation; L-histidine degradation into L-glutamate; N-formimidoyl-L-glutamate from L-histidine: step 2/3. Functionally, catalyzes the conversion of urocanate to 4-imidazolone-5-propionate. The polypeptide is Urocanate hydratase (Pseudomonas putida (strain GB-1)).